The chain runs to 315 residues: Zinc finger CCCH domain-containing protein 23 (315 aa).

Residues 1-21 (MMIGENKNRPHPTIHIPQWDQ) are disordered. 2 C3H1-type zinc fingers span residues 131–157 (YSGT…HGVF) and 165–189 (RYRT…HTTE).

The polypeptide is Zinc finger CCCH domain-containing protein 23 (Arabidopsis thaliana (Mouse-ear cress)).